Consider the following 396-residue polypeptide: Phosphoglycerate kinase (396 aa).

Substrate-binding positions include 21 to 23 (DFN), Arg-36, 59 to 62 (HFDR), Arg-118, and Arg-151. ATP contacts are provided by residues Lys-201, Glu-323, and 353-356 (GGDT).

It belongs to the phosphoglycerate kinase family. Monomer.

It is found in the cytoplasm. It catalyses the reaction (2R)-3-phosphoglycerate + ATP = (2R)-3-phospho-glyceroyl phosphate + ADP. It functions in the pathway carbohydrate degradation; glycolysis; pyruvate from D-glyceraldehyde 3-phosphate: step 2/5. This is Phosphoglycerate kinase from Caulobacter sp. (strain K31).